The sequence spans 163 residues: Phosphopantetheine adenylyltransferase (163 aa).

ATP is bound by residues Ser10 and His18. Substrate is bound at residue Ser10. Substrate-binding residues include Lys42, Thr75, and Arg89. Residues 90–92 (GIR), Glu100, and 125–131 (YAHVSSS) each bind ATP.

The protein belongs to the bacterial CoaD family. In terms of assembly, homohexamer. Mg(2+) is required as a cofactor.

The protein localises to the cytoplasm. It catalyses the reaction (R)-4'-phosphopantetheine + ATP + H(+) = 3'-dephospho-CoA + diphosphate. Its pathway is cofactor biosynthesis; coenzyme A biosynthesis; CoA from (R)-pantothenate: step 4/5. Its function is as follows. Reversibly transfers an adenylyl group from ATP to 4'-phosphopantetheine, yielding dephospho-CoA (dPCoA) and pyrophosphate. In Enterococcus faecalis (strain ATCC 700802 / V583), this protein is Phosphopantetheine adenylyltransferase.